Reading from the N-terminus, the 473-residue chain is ATP synthase subunit beta (473 aa).

Residue 158 to 165 (GGAGVGKT) coordinates ATP.

Belongs to the ATPase alpha/beta chains family. In terms of assembly, F-type ATPases have 2 components, CF(1) - the catalytic core - and CF(0) - the membrane proton channel. CF(1) has five subunits: alpha(3), beta(3), gamma(1), delta(1), epsilon(1). CF(0) has three main subunits: a(1), b(2) and c(9-12). The alpha and beta chains form an alternating ring which encloses part of the gamma chain. CF(1) is attached to CF(0) by a central stalk formed by the gamma and epsilon chains, while a peripheral stalk is formed by the delta and b chains.

The protein localises to the cell membrane. It catalyses the reaction ATP + H2O + 4 H(+)(in) = ADP + phosphate + 5 H(+)(out). Its function is as follows. Produces ATP from ADP in the presence of a proton gradient across the membrane. The catalytic sites are hosted primarily by the beta subunits. This Bacillus caldotenax protein is ATP synthase subunit beta.